Consider the following 231-residue polypeptide: Transmembrane gamma-carboxyglutamic acid protein 3 (231 aa).

Positions 1-19 are excised as a propeptide; it reads MAVFLEAKNAHAVLKRFPR. Residues 20–65 enclose the Gla domain; sequence ANEFLEELRQGTIERECMEEICSYEEVKEVFENKEKTMEFWKGYPN. At 20-78 the chain is on the extracellular side; it reads ANEFLEELRQGTIERECMEEICSYEEVKEVFENKEKTMEFWKGYPNAVYSVRDPSQSSD. A 4-carboxyglutamate mark is found at Glu22, Glu25, Glu26, Glu33, Glu35, Glu38, Glu39, Glu44, Glu45, Glu48, Glu51, Glu54, and Glu58. Cys36 and Cys41 are joined by a disulfide. The chain crosses the membrane as a helical span at residues 79–101; it reads AMYVVVPLLGVVLLIVIALFIIW. The Cytoplasmic segment spans residues 102-231; the sequence is RCQLQKATRH…IVAASPSADK (130 aa). Disordered stretches follow at residues 140–165 and 184–231; these read HSQG…SRGG and RLSS…SADK. Positions 201–212 are enriched in polar residues; sequence QEGSSEEASVSY.

In terms of processing, gla residues are produced after subsequent post-translational modifications of glutamate by a vitamin K-dependent gamma-carboxylase.

The protein resides in the membrane. The protein is Transmembrane gamma-carboxyglutamic acid protein 3 (Prrg3) of Mus musculus (Mouse).